We begin with the raw amino-acid sequence, 102 residues long: NADH-quinone oxidoreductase subunit K 1 (102 aa).

3 helical membrane passes run 5 to 25 (LSHYLTVSAILFTLGVFGIFL), 31 to 51 (IVILMSVELILLSVNINMVAF), and 65 to 85 (LFILTVAAAEAAIGLAILVVF).

Belongs to the complex I subunit 4L family. NDH-1 is composed of 14 different subunits. Subunits NuoA, H, J, K, L, M, N constitute the membrane sector of the complex.

The protein localises to the cell inner membrane. The enzyme catalyses a quinone + NADH + 5 H(+)(in) = a quinol + NAD(+) + 4 H(+)(out). In terms of biological role, NDH-1 shuttles electrons from NADH, via FMN and iron-sulfur (Fe-S) centers, to quinones in the respiratory chain. The immediate electron acceptor for the enzyme in this species is believed to be ubiquinone. Couples the redox reaction to proton translocation (for every two electrons transferred, four hydrogen ions are translocated across the cytoplasmic membrane), and thus conserves the redox energy in a proton gradient. The chain is NADH-quinone oxidoreductase subunit K 1 from Rhizobium etli (strain CIAT 652).